We begin with the raw amino-acid sequence, 263 residues long: HLA class II histocompatibility antigen, DM beta chain (263 aa).

Residues 1–18 form the signal peptide; sequence MITFLPLLLGLSLGCTGA. A beta-1 region spans residues 19–112; sequence GGFVAHVEST…PFWGSLTNRT (94 aa). Residues 19–218 lie on the Lumenal side of the membrane; that stretch reads GGFVAHVEST…PGLSPMQTLK (200 aa). 2 disulfides stabilise this stretch: Cys-29–Cys-97 and Cys-43–Cys-53. N-linked (GlcNAc...) asparagine glycosylation is present at Asn-110. The interval 113–207 is beta-2; sequence RPPSVQVAKT…GAPEPILRDW (95 aa). The Ig-like C1-type domain maps to 114–208; sequence PPSVQVAKTT…APEPILRDWT (95 aa). Cys-135 and Cys-192 are joined by a disulfide. The segment at 208 to 218 is connecting peptide; sequence TPGLSPMQTLK. The chain crosses the membrane as a helical span at residues 219–239; sequence VSVSAVTLGLGLIIFSLGVIS. Residues 240 to 263 lie on the Cytoplasmic side of the membrane; sequence WRRAGHSSYTPLPGSNYSEGWHIS. A YXXZ motif motif is present at residues 248–251; the sequence is YTPL.

This sequence belongs to the MHC class II family. In terms of assembly, heterodimer of an alpha chain (DMA) and a beta chain (DMB). Interacts with MHCII; this interaction mediates rapid selection of high-affinity peptides in a pH-dependent manner, with an optimum at pH 5.5.

The protein localises to the late endosome membrane. It is found in the lysosome membrane. Functionally, plays a critical role in catalyzing the release of class II-associated invariant chain peptide (CLIP) from newly synthesized MHC class II molecules and freeing the peptide binding site for acquisition of antigenic peptides. In B-cells, the interaction between HLA-DM and MHC class II molecules is regulated by HLA-DO. This chain is HLA class II histocompatibility antigen, DM beta chain (HLA-DMB), found in Homo sapiens (Human).